The primary structure comprises 475 residues: MDGTGNRNPPPTSTVGDNSPPPEPSPESLRHVSRMINSNHYTSPSRTIYSDRFIPSRSASKFALFDINTPTEGRDDSSSAYTTLLRTALFGPDVAGPVTPEKTDSPSMTLPNRNIFRYKTETRQSMHSLSPFMDDDFVPGINHSPVKAPRKVPRSPYKVLDAPALQDDFYLNLVDWSSHNVLAVGLGNCVYLWNACSSKVTKLCDLGVDDCVCSVGWAQRGTHLAVGTNNGKVQIWDAARCKKIRSMEGHRLRVGALAWSSSLLSSGGRDKNIYQRDIRTQEDFVSKLSGHKSEVCGLKWSYDNRELASGGNDNKLFVWNQHSTQPVLKYCEHTAAVKAIAWSPHLHGLLASGGGTADRCIRFWNTTTNSHLSCMDTGSQVCNLVWSKNVNELVSTHGYSQNQIIVWRYPTMSKLATLTGHTYRVLYLAISPDGQTIVTGAGDETLRFWNVFPSPKSQNTESEIGALSLGRTTIR.

The segment at 1 to 29 (MDGTGNRNPPPTSTVGDNSPPPEPSPESL) is disordered. The short motif at 7 to 28 (RNPPPTSTVGDNSPPPEPSPES) is the PEST motif element. Phosphoserine is present on residues Ser-43 and Ser-45. Positions 51-57 (DRFIPSR) match the C-box motif. The CSM motif signature appears at 80 to 91 (AYTTLLRTALFG). Residue Thr-99 is modified to Phosphothreonine. Residues Ser-144 and Ser-155 each carry the phosphoserine modification. 7 WD repeats span residues 166–203 (QDDFYLNLVDWSSHNVLAVGLGNCVYLWNACSSKVTKL), 207–246 (GVDDCVCSVGWAQRGTHLAVGTNNGKVQIWDAARCKKIRS), 249–289 (GHRL…SKLS), 290–329 (GHKSEVCGLKWSYDNRELASGGNDNKLFVWNQHSTQPVLK), 332–374 (EHTA…HLSC), 376–417 (DTGS…KLAT), and 420–459 (GHTYRVLYLAISPDGQTIVTGAGDETLRFWNVFPSPKSQN). Residue Ser-454 is modified to Phosphoserine.

The protein belongs to the WD repeat CDC20/Fizzy family. As to expression, mostly expressed in nodules, and, to a lower extent, in root tips, stems, hypocotyls, leaves, flower buds and flowers.

The protein localises to the nucleus. Its pathway is protein modification; protein ubiquitination. Its function is as follows. Component of the anaphase promoting complex/cyclosome (APC/C), a cell cycle-regulated E3 ubiquitin-protein ligase complex that controls progression through mitosis and the G1 phase of the cell cycle. Required to switch form cell proliferation to cell differentiation, endoreduplication and ploidy-dependent cell enlargement, including during nodulation, before nodule differentiation. Involved in root-knot nematode Meloidogyne incognita giant cells formation. The polypeptide is B-type cell cycle switch protein ccs52A (Medicago truncatula (Barrel medic)).